Consider the following 362-residue polypeptide: 4-hydroxythreonine-4-phosphate dehydrogenase (362 aa).

T149 provides a ligand contact to substrate. 3 residues coordinate a divalent metal cation: H184, H229, and H295. Substrate is bound by residues K303, N312, and R321.

This sequence belongs to the PdxA family. Homodimer. It depends on a divalent metal cation as a cofactor.

The protein localises to the cytoplasm. The enzyme catalyses 4-(phosphooxy)-L-threonine + NAD(+) = 3-amino-2-oxopropyl phosphate + CO2 + NADH. Its pathway is cofactor biosynthesis; pyridoxine 5'-phosphate biosynthesis; pyridoxine 5'-phosphate from D-erythrose 4-phosphate: step 4/5. Its function is as follows. Catalyzes the NAD(P)-dependent oxidation of 4-(phosphooxy)-L-threonine (HTP) into 2-amino-3-oxo-4-(phosphooxy)butyric acid which spontaneously decarboxylates to form 3-amino-2-oxopropyl phosphate (AHAP). This chain is 4-hydroxythreonine-4-phosphate dehydrogenase, found in Nostoc sp. (strain PCC 7120 / SAG 25.82 / UTEX 2576).